The following is a 253-amino-acid chain: 5-oxoprolinase subunit A (253 aa).

The protein belongs to the LamB/PxpA family. Forms a complex composed of PxpA, PxpB and PxpC.

The enzyme catalyses 5-oxo-L-proline + ATP + 2 H2O = L-glutamate + ADP + phosphate + H(+). Catalyzes the cleavage of 5-oxoproline to form L-glutamate coupled to the hydrolysis of ATP to ADP and inorganic phosphate. The chain is 5-oxoprolinase subunit A from Syntrophobacter fumaroxidans (strain DSM 10017 / MPOB).